A 208-amino-acid polypeptide reads, in one-letter code: Holliday junction branch migration complex subunit RuvA (208 aa).

A domain I region spans residues 1–63 (MIAFVSGPVA…EDSLTLYGFA (63 aa)). The segment at 64 to 142 (NDDERQVFEL…EPVGAHIGQQ (79 aa)) is domain II. The interval 143–147 (GIGTP) is flexible linker. The domain III stretch occupies residues 148–208 (VTSGWRDQLQ…AALQTLNRAR (61 aa)).

This sequence belongs to the RuvA family. Homotetramer. Forms an RuvA(8)-RuvB(12)-Holliday junction (HJ) complex. HJ DNA is sandwiched between 2 RuvA tetramers; dsDNA enters through RuvA and exits via RuvB. An RuvB hexamer assembles on each DNA strand where it exits the tetramer. Each RuvB hexamer is contacted by two RuvA subunits (via domain III) on 2 adjacent RuvB subunits; this complex drives branch migration. In the full resolvosome a probable DNA-RuvA(4)-RuvB(12)-RuvC(2) complex forms which resolves the HJ.

Its subcellular location is the cytoplasm. The RuvA-RuvB-RuvC complex processes Holliday junction (HJ) DNA during genetic recombination and DNA repair, while the RuvA-RuvB complex plays an important role in the rescue of blocked DNA replication forks via replication fork reversal (RFR). RuvA specifically binds to HJ cruciform DNA, conferring on it an open structure. The RuvB hexamer acts as an ATP-dependent pump, pulling dsDNA into and through the RuvAB complex. HJ branch migration allows RuvC to scan DNA until it finds its consensus sequence, where it cleaves and resolves the cruciform DNA. The polypeptide is Holliday junction branch migration complex subunit RuvA (Streptomyces griseus subsp. griseus (strain JCM 4626 / CBS 651.72 / NBRC 13350 / KCC S-0626 / ISP 5235)).